Reading from the N-terminus, the 239-residue chain is Ribonuclease PH (239 aa).

Phosphate contacts are provided by residues R86 and 124-126 (GTR).

It belongs to the RNase PH family. In terms of assembly, homohexameric ring arranged as a trimer of dimers.

It catalyses the reaction tRNA(n+1) + phosphate = tRNA(n) + a ribonucleoside 5'-diphosphate. Functionally, phosphorolytic 3'-5' exoribonuclease that plays an important role in tRNA 3'-end maturation. Removes nucleotide residues following the 3'-CCA terminus of tRNAs; can also add nucleotides to the ends of RNA molecules by using nucleoside diphosphates as substrates, but this may not be physiologically important. Probably plays a role in initiation of 16S rRNA degradation (leading to ribosome degradation) during starvation. This Rhodopseudomonas palustris (strain BisB18) protein is Ribonuclease PH.